Reading from the N-terminus, the 137-residue chain is Small heat shock protein IbpA (137 aa).

In terms of domain architecture, sHSP spans 28–137 (TQSNGGYPPY…AMKPRRIEIK (110 aa)).

The protein belongs to the small heat shock protein (HSP20) family. In terms of assembly, monomer. Forms homomultimers of about 100-150 subunits at optimal growth temperatures. Conformation changes to monomers at high temperatures or high ionic concentrations.

It is found in the cytoplasm. Its function is as follows. Associates with aggregated proteins, together with IbpB, to stabilize and protect them from irreversible denaturation and extensive proteolysis during heat shock and oxidative stress. Aggregated proteins bound to the IbpAB complex are more efficiently refolded and reactivated by the ATP-dependent chaperone systems ClpB and DnaK/DnaJ/GrpE. Its activity is ATP-independent. This chain is Small heat shock protein IbpA, found in Pectobacterium atrosepticum (strain SCRI 1043 / ATCC BAA-672) (Erwinia carotovora subsp. atroseptica).